We begin with the raw amino-acid sequence, 309 residues long: Succinate--CoA ligase [ADP-forming] subunit alpha-2, mitochondrial (309 aa).

A hydrogenosome-targeting transit peptide spans Met1–Asn9. Residues Lys54 and Ile107 to Glu109 each bind CoA. Tyr171 serves as a coordination point for substrate. The active-site Tele-phosphohistidine intermediate is His262.

This sequence belongs to the succinate/malate CoA ligase alpha subunit family. As to quaternary structure, heterodimer of an alpha and a beta subunit.

It localises to the hydrogenosome lumen. It carries out the reaction succinate + ATP + CoA = succinyl-CoA + ADP + phosphate. The protein operates within carbohydrate metabolism; tricarboxylic acid cycle; succinate from succinyl-CoA (ligase route): step 1/1. Its function is as follows. Succinyl-CoA synthetase functions in the citric acid cycle (TCA), coupling the hydrolysis of succinyl-CoA to the synthesis of ATP and thus represents the only step of substrate-level phosphorylation in the TCA. The alpha subunit of the enzyme binds the substrates coenzyme A and phosphate, while succinate binding and nucleotide specificity is provided by the beta subunit. This Trichomonas vaginalis protein is Succinate--CoA ligase [ADP-forming] subunit alpha-2, mitochondrial (ALPHA-SCS2).